A 219-amino-acid chain; its full sequence is Small ribosomal subunit protein uS19 (219 aa).

Residues 1–128 (MGFKGAWNKR…YEEIYAQYKQ (128 aa)) are unknown. A small ribosomal subunit protein uS19 region spans residues 129 to 219 (MTEKKAYVDP…DKTAKVVKKK (91 aa)).

It belongs to the universal ribosomal protein uS19 family.

Its function is as follows. Protein S19 forms a complex with S13 that binds strongly to the 16S ribosomal RNA. In Aquifex pyrophilus, this protein is Small ribosomal subunit protein uS19.